Consider the following 320-residue polypeptide: Acetyl-coenzyme A carboxylase carboxyl transferase subunit alpha (320 aa).

In terms of domain architecture, CoA carboxyltransferase C-terminal spans 41–295; it reads RIEEKAGQAL…GDAIAQAFDE (255 aa).

Belongs to the AccA family. As to quaternary structure, acetyl-CoA carboxylase is a heterohexamer composed of biotin carboxyl carrier protein (AccB), biotin carboxylase (AccC) and two subunits each of ACCase subunit alpha (AccA) and ACCase subunit beta (AccD).

It localises to the cytoplasm. The catalysed reaction is N(6)-carboxybiotinyl-L-lysyl-[protein] + acetyl-CoA = N(6)-biotinyl-L-lysyl-[protein] + malonyl-CoA. Its pathway is lipid metabolism; malonyl-CoA biosynthesis; malonyl-CoA from acetyl-CoA: step 1/1. Functionally, component of the acetyl coenzyme A carboxylase (ACC) complex. First, biotin carboxylase catalyzes the carboxylation of biotin on its carrier protein (BCCP) and then the CO(2) group is transferred by the carboxyltransferase to acetyl-CoA to form malonyl-CoA. In Bradyrhizobium sp. (strain ORS 278), this protein is Acetyl-coenzyme A carboxylase carboxyl transferase subunit alpha.